A 555-amino-acid chain; its full sequence is Wee1-like protein kinase 2 (555 aa).

The interval M1–G112 is disordered. S15 carries the post-translational modification Phosphoserine; by CaMK2 and PKA. Over residues E26 to K41 the composition is skewed to polar residues. Residues T57 to P72 are compositionally biased toward basic and acidic residues. S71 is modified (phosphoserine). Residues T102–G112 show a composition bias toward polar residues. The short motif at K167–K169 is the Nuclear localization signal element. Positions F208–L485 constitute a Protein kinase domain. ATP-binding positions include I214 to V222 and K237. Positions K310–Y324 match the Nuclear export signal motif. Residue D334 is the Proton acceptor of the active site. Positions 339 and 375 each coordinate Mg(2+). Residues T488–H514 are a coiled coil.

This sequence belongs to the protein kinase superfamily. Ser/Thr protein kinase family. WEE1 subfamily. In terms of processing, phosphorylated by PKA at Ser-15 in vitro, leading to activate kinase activity. Phosphorylation at Ser-15 by CaMK2, leading to increase its activity and promote metaphase II exit during egg activation. In terms of tissue distribution, ovary-specific.

It is found in the cytoplasm. The protein resides in the nucleus. The enzyme catalyses L-tyrosyl-[protein] + ATP = O-phospho-L-tyrosyl-[protein] + ADP + H(+). Its function is as follows. Oocyte-specific protein tyrosine kinase that phosphorylates and inhibits CDK1 and acts as a key regulator of meiosis during both prophase I and metaphase II. Required to maintain meiotic arrest in oocytes during the germinal vesicle (GV) stage, a long period of quiescence at dictyate prophase I, by phosphorylating CDK1 at 'Tyr-15', leading to inhibit CDK1 activity and prevent meiotic reentry. Also required for metaphase II exit during egg activation by phosphorylating CDK1 at 'Tyr-15', to ensure exit from meiosis in oocytes and promote pronuclear formation. The polypeptide is Wee1-like protein kinase 2 (Wee2) (Mus musculus (Mouse)).